A 175-amino-acid chain; its full sequence is ATP synthase subunit delta (175 aa).

The protein belongs to the ATPase delta chain family. In terms of assembly, F-type ATPases have 2 components, F(1) - the catalytic core - and F(0) - the membrane proton channel. F(1) has five subunits: alpha(3), beta(3), gamma(1), delta(1), epsilon(1). F(0) has three main subunits: a(1), b(2) and c(10-14). The alpha and beta chains form an alternating ring which encloses part of the gamma chain. F(1) is attached to F(0) by a central stalk formed by the gamma and epsilon chains, while a peripheral stalk is formed by the delta and b chains.

The protein localises to the cell inner membrane. Functionally, f(1)F(0) ATP synthase produces ATP from ADP in the presence of a proton or sodium gradient. F-type ATPases consist of two structural domains, F(1) containing the extramembraneous catalytic core and F(0) containing the membrane proton channel, linked together by a central stalk and a peripheral stalk. During catalysis, ATP synthesis in the catalytic domain of F(1) is coupled via a rotary mechanism of the central stalk subunits to proton translocation. Its function is as follows. This protein is part of the stalk that links CF(0) to CF(1). It either transmits conformational changes from CF(0) to CF(1) or is implicated in proton conduction. This Xanthomonas axonopodis pv. citri (strain 306) protein is ATP synthase subunit delta.